Reading from the N-terminus, the 292-residue chain is Homoserine kinase (292 aa).

84-94 (PFSRGLGSSSA) serves as a coordination point for ATP.

The protein belongs to the GHMP kinase family. Homoserine kinase subfamily.

It is found in the cytoplasm. The catalysed reaction is L-homoserine + ATP = O-phospho-L-homoserine + ADP + H(+). Its pathway is amino-acid biosynthesis; L-threonine biosynthesis; L-threonine from L-aspartate: step 4/5. In terms of biological role, catalyzes the ATP-dependent phosphorylation of L-homoserine to L-homoserine phosphate. The sequence is that of Homoserine kinase from Campylobacter hominis (strain ATCC BAA-381 / DSM 21671 / CCUG 45161 / LMG 19568 / NCTC 13146 / CH001A).